A 273-amino-acid polypeptide reads, in one-letter code: MTFDEWLGLSKLPKIEARMLLQYVSEYTRVQLLTRGGEEMPDEIRQRADRLAQRRLNGEPVAYILGVREFYGRRFTVNPNVLIPRPETEHLVEAVLARLPENGRVWDLGTGSGAVAVTVALERPDAFVRASDISTPALETARKNAADLGARVEFAHGSWFDTDMPSERQWDIIVSNPPYIENGDKHLSQGDLRFEPQIALTDFSDGLSCIRTLAQGAPDRLAEGGFLLLEHGFDQGAAVRGVLAENGFSGVEILPDLAGLDRVTLGKYMKHLK.

S-adenosyl-L-methionine-binding positions include 109–113 (GTGSG), D132, W159, and N176. 176-179 (NPPY) lines the substrate pocket.

The protein belongs to the protein N5-glutamine methyltransferase family. PrmC subfamily.

It catalyses the reaction L-glutaminyl-[peptide chain release factor] + S-adenosyl-L-methionine = N(5)-methyl-L-glutaminyl-[peptide chain release factor] + S-adenosyl-L-homocysteine + H(+). Methylates the class 1 translation termination release factors RF1/PrfA and RF2/PrfB on the glutamine residue of the universally conserved GGQ motif. This Neisseria gonorrhoeae (strain ATCC 700825 / FA 1090) protein is Release factor glutamine methyltransferase.